The following is a 512-amino-acid chain: 2-isopropylmalate synthase (512 aa).

In terms of domain architecture, Pyruvate carboxyltransferase spans 5–268; it reads LIIFDTTLRD…DLGIATQHIL (264 aa). Mn(2+)-binding residues include aspartate 14, histidine 202, histidine 204, and asparagine 239. Positions 394–512 are regulatory domain; that stretch reads GFVSLFQQSE…NKADRVAAQG (119 aa).

The protein belongs to the alpha-IPM synthase/homocitrate synthase family. LeuA type 1 subfamily. As to quaternary structure, homodimer. Mn(2+) serves as cofactor.

It is found in the cytoplasm. It carries out the reaction 3-methyl-2-oxobutanoate + acetyl-CoA + H2O = (2S)-2-isopropylmalate + CoA + H(+). It functions in the pathway amino-acid biosynthesis; L-leucine biosynthesis; L-leucine from 3-methyl-2-oxobutanoate: step 1/4. Functionally, catalyzes the condensation of the acetyl group of acetyl-CoA with 3-methyl-2-oxobutanoate (2-ketoisovalerate) to form 3-carboxy-3-hydroxy-4-methylpentanoate (2-isopropylmalate). This Verminephrobacter eiseniae (strain EF01-2) protein is 2-isopropylmalate synthase.